A 136-amino-acid polypeptide reads, in one-letter code: Small ribosomal subunit protein uS9 (136 aa).

Positions 97 to 136 (SPDNRKPLKTEGHLSRDPRAKERRKYGLKKARKAPQFSKR) are disordered. Residues 98–116 (PDNRKPLKTEGHLSRDPRA) show a composition bias toward basic and acidic residues. The segment covering 117–136 (KERRKYGLKKARKAPQFSKR) has biased composition (basic residues).

The protein belongs to the universal ribosomal protein uS9 family.

This Prochlorococcus marinus (strain AS9601) protein is Small ribosomal subunit protein uS9.